We begin with the raw amino-acid sequence, 168 residues long: RNA pyrophosphohydrolase (168 aa).

In terms of domain architecture, Nudix hydrolase spans Pro-8–Arg-160. The Nudix box motif lies at Gly-47–Ser-68.

Belongs to the Nudix hydrolase family. RppH subfamily. A divalent metal cation serves as cofactor.

Accelerates the degradation of transcripts by removing pyrophosphate from the 5'-end of triphosphorylated RNA, leading to a more labile monophosphorylated state that can stimulate subsequent ribonuclease cleavage. The protein is RNA pyrophosphohydrolase of Azorhizobium caulinodans (strain ATCC 43989 / DSM 5975 / JCM 20966 / LMG 6465 / NBRC 14845 / NCIMB 13405 / ORS 571).